We begin with the raw amino-acid sequence, 135 residues long: Large ribosomal subunit protein uL18 (135 aa).

A disordered region spans residues 1 to 23; that stretch reads MSQTANQKAKRIPLGKDASTKRR.

This sequence belongs to the universal ribosomal protein uL18 family. As to quaternary structure, part of the 50S ribosomal subunit; part of the 5S rRNA/L5/L18/L25 subcomplex. Contacts the 5S and 23S rRNAs.

In terms of biological role, this is one of the proteins that bind and probably mediate the attachment of the 5S RNA into the large ribosomal subunit, where it forms part of the central protuberance. The sequence is that of Large ribosomal subunit protein uL18 from Rhodococcus jostii (strain RHA1).